Reading from the N-terminus, the 506-residue chain is Anaerobic nitric oxide reductase transcription regulator NorR (506 aa).

Asp57 carries the 4-aspartylphosphate modification. Residues 187–416 enclose the Sigma-54 factor interaction domain; that stretch reads MIGLSPAMTQ…LEHAIHRAVV (230 aa). Residues 215–222 and 278–287 each bind ATP; these read GETGTGKE and ADNGTLFLDE. The segment at residues 481 to 500 is a DNA-binding region (H-T-H motif); it reads WAASARALETDVANLHRLAK.

It participates in nitrogen metabolism; nitric oxide reduction. Required for the expression of anaerobic nitric oxide (NO) reductase, acts as a transcriptional activator for at least the norVW operon. Activation also requires sigma-54. The sequence is that of Anaerobic nitric oxide reductase transcription regulator NorR from Salmonella arizonae (strain ATCC BAA-731 / CDC346-86 / RSK2980).